Here is a 1197-residue protein sequence, read N- to C-terminus: ATP-dependent helicase/nuclease subunit A (1197 aa).

Residues 2–458 form the UvrD-like helicase ATP-binding domain; sequence KNWTTEQQAA…IDLAKNFRSR (457 aa). 23 to 30 serves as a coordination point for ATP; sequence AAAGSGKT. The 290-residue stretch at 485 to 774 folds into the UvrD-like helicase C-terminal domain; sequence RAALYQGASF…RIMSIHKSKG (290 aa).

It belongs to the helicase family. AddA subfamily. In terms of assembly, heterodimer of AddA and AddB/RexB. It depends on Mg(2+) as a cofactor.

It catalyses the reaction Couples ATP hydrolysis with the unwinding of duplex DNA by translocating in the 3'-5' direction.. It carries out the reaction ATP + H2O = ADP + phosphate + H(+). In terms of biological role, the heterodimer acts as both an ATP-dependent DNA helicase and an ATP-dependent, dual-direction single-stranded exonuclease. Recognizes the chi site generating a DNA molecule suitable for the initiation of homologous recombination. The AddA nuclease domain is required for chi fragment generation; this subunit has the helicase and 3' -&gt; 5' nuclease activities. In Alkaliphilus metalliredigens (strain QYMF), this protein is ATP-dependent helicase/nuclease subunit A.